The chain runs to 203 residues: uncharacterized protein (203 aa).

The segment at Met1–Lys23 is disordered.

This is an uncharacterized protein from Saccharomyces cerevisiae (strain ATCC 204508 / S288c) (Baker's yeast).